Here is a 398-residue protein sequence, read N- to C-terminus: Argininosuccinate synthase (398 aa).

8 to 16 contacts ATP; that stretch reads AYSGGLDTS. Y87 contributes to the L-citrulline binding site. G117 lines the ATP pocket. L-aspartate contacts are provided by T119, N123, and D124. Residue N123 participates in L-citrulline binding. Residues R127, S175, E260, and Y272 each coordinate L-citrulline.

Belongs to the argininosuccinate synthase family. Type 1 subfamily. As to quaternary structure, homotetramer.

It is found in the cytoplasm. It carries out the reaction L-citrulline + L-aspartate + ATP = 2-(N(omega)-L-arginino)succinate + AMP + diphosphate + H(+). It participates in amino-acid biosynthesis; L-arginine biosynthesis; L-arginine from L-ornithine and carbamoyl phosphate: step 2/3. The polypeptide is Argininosuccinate synthase (Mycobacterium marinum (strain ATCC BAA-535 / M)).